A 299-amino-acid polypeptide reads, in one-letter code: Arginase (299 aa).

Mn(2+) is bound by residues H99, D122, H124, and D126. Residues 124 to 128 (HGDVN), 135 to 137 (SGN), and D178 contribute to the substrate site. The Mn(2+) site is built by D226 and D228. Positions 240 and 271 each coordinate substrate.

This sequence belongs to the arginase family. Homohexamer. The cofactor is Mn(2+).

The enzyme catalyses L-arginine + H2O = urea + L-ornithine. It participates in nitrogen metabolism; urea cycle; L-ornithine and urea from L-arginine: step 1/1. In terms of biological role, controls arginine catabolism. This Bacillus caldovelox protein is Arginase (rocF).